The primary structure comprises 89 residues: Barrier-to-autointegration factor (89 aa).

Position 1 is an N-acetylmethionine (M1). T2 is modified (N-acetylthreonine; in Barrier-to-autointegration factor, N-terminally processed). 2 positions are modified to phosphothreonine; by VRK1 and VRK2: T2 and T3. A Phosphoserine; by VRK1 and VRK2 modification is found at S4. One can recognise a HhH domain in the interval 20-35; it reads VGSLAGIGEVLGKKLE.

The protein belongs to the BAF family. As to quaternary structure, homodimer. Heterodimerizes with BANF2. Interacts with ANKLE2/LEM4, leading to decreased phosphorylation by VRK1 and promoting dephosphorylation by protein phosphatase 2A (PP2A). Binds non-specifically to double-stranded DNA, and is found as a hexamer or dodecamer upon DNA binding. Binds to LEM domain-containing nuclear proteins such as LEMD3/MAN1, TMPO/LAP2 and EMD (emerin). Interacts with ANKLE1 (via LEM domain); the interaction may favor BANF1 dimerization. Interacts with CRX and LMNA (lamin-A). Binds linker histone H1.1 and core histones H3. Interacts with LEMD2 (via LEM domain). Interacts with PARP1; interaction takes place in response to oxidative DNA damage. Ser-4 is the major site of phosphorylation as compared to Thr-2 and Thr-3. Phosphorylation on Thr-2; Thr-3 and Ser-4 disrupts its ability to bind DNA and reduces its ability to bind LEM domain-containing proteins. Non phosphorylated BAF seems to enhance binding between EMD and LMNA. Dephosphorylated by protein phosphatase 2A (PP2A) following interaction with ANKLE2/LEM4 during mitotic exit, leading to mitotic nuclear envelope reassembly.

It is found in the nucleus. The protein resides in the chromosome. It localises to the nucleus envelope. Its subcellular location is the cytoplasm. Its function is as follows. Non-specific DNA-binding protein that plays key roles in mitotic nuclear reassembly, chromatin organization, DNA damage response, gene expression and intrinsic immunity against foreign DNA. Contains two non-specific double-stranded DNA (dsDNA)-binding sites which promote DNA cross-bridging. Plays a key role in nuclear membrane reformation at the end of mitosis by driving formation of a single nucleus in a spindle-independent manner. Transiently cross-bridges anaphase chromosomes via its ability to bridge distant DNA sites, leading to the formation of a dense chromatin network at the chromosome ensemble surface that limits membranes to the surface. Also acts as a negative regulator of innate immune activation by restricting CGAS activity toward self-DNA upon acute loss of nuclear membrane integrity. Outcompetes CGAS for DNA-binding, thereby preventing CGAS activation and subsequent damaging autoinflammatory responses. Also involved in DNA damage response: interacts with PARP1 in response to oxidative stress, thereby inhibiting the ADP-ribosyltransferase activity of PARP1. Involved in the recognition of exogenous dsDNA in the cytosol: associates with exogenous dsDNA immediately after its appearance in the cytosol at endosome breakdown and is required to avoid autophagy. In case of poxvirus infection, has an antiviral activity by blocking viral DNA replication. The polypeptide is Barrier-to-autointegration factor (BANF1) (Bos taurus (Bovine)).